A 217-amino-acid chain; its full sequence is Probable transaldolase (217 aa).

The active-site Schiff-base intermediate with substrate is the Lys-83.

It belongs to the transaldolase family. Type 3B subfamily.

It localises to the cytoplasm. The catalysed reaction is D-sedoheptulose 7-phosphate + D-glyceraldehyde 3-phosphate = D-erythrose 4-phosphate + beta-D-fructose 6-phosphate. The protein operates within carbohydrate degradation; pentose phosphate pathway; D-glyceraldehyde 3-phosphate and beta-D-fructose 6-phosphate from D-ribose 5-phosphate and D-xylulose 5-phosphate (non-oxidative stage): step 2/3. Functionally, transaldolase is important for the balance of metabolites in the pentose-phosphate pathway. The sequence is that of Probable transaldolase from Chelativorans sp. (strain BNC1).